The primary structure comprises 128 residues: Nucleoside diphosphate kinase B (128 aa).

Met-1 bears the N-acetylmethionine mark. 5 residues coordinate ATP: Lys-9, Phe-39, Thr-70, Arg-81, and Asn-91. The Pros-phosphohistidine intermediate role is filled by His-94.

This sequence belongs to the NDK family. Mg(2+) serves as cofactor.

The protein localises to the cytoplasm. It localises to the nucleus. Its subcellular location is the cell projection. It is found in the lamellipodium. The protein resides in the ruffle. The enzyme catalyses a 2'-deoxyribonucleoside 5'-diphosphate + ATP = a 2'-deoxyribonucleoside 5'-triphosphate + ADP. It carries out the reaction a ribonucleoside 5'-diphosphate + ATP = a ribonucleoside 5'-triphosphate + ADP. Its function is as follows. Major role in the synthesis of nucleoside triphosphates other than ATP. This chain is Nucleoside diphosphate kinase B (nme2), found in Merluccius australis australis (Austral hake).